Reading from the N-terminus, the 408-residue chain is Zinc finger and SCAN domain-containing protein 1 (408 aa).

The tract at residues 1-34 (MLPRPKAPASPRRPQTPTPSEQDADPGPASPRDT) is disordered. In terms of domain architecture, SCAN box spans 38 to 120 (RLRFRQFQYH…SLVEDLTQMC (83 aa)). Disordered regions lie at residues 136-155 (WSFG…EPSQ), 177-203 (LETT…LLGS), and 215-273 (DEPE…GGTQ). Over residues 177–187 (LETTQLQQSLH) the composition is skewed to polar residues. 2 C2H2-type zinc fingers span residues 292 to 314 (FQCA…QKTH) and 320 to 342 (FPCP…GKIH). Positions 344–379 (LEPPRKKAPRSKGPRESVPPRDGAQGPVAPRSPKRP) are disordered. A C2H2-type 3 zinc finger spans residues 380–402 (FQCSVCGKAFPWMVHLIDHQKLH).

It is found in the nucleus. Its function is as follows. May be involved in transcriptional regulation. The chain is Zinc finger and SCAN domain-containing protein 1 (ZSCAN1) from Homo sapiens (Human).